The chain runs to 117 residues: Cytochrome c6 (117 aa).

The signal sequence occupies residues 1-24 (MKKLLAIALTVLATVFAFGTPAFA). Residues C38, C41, H42, and M89 each coordinate heme c.

It belongs to the cytochrome c family. PetJ subfamily. Monomer. Binds 1 heme c group covalently per subunit.

It localises to the cellular thylakoid lumen. Its function is as follows. Functions as an electron carrier between membrane-bound cytochrome b6-f and photosystem I in oxygenic photosynthesis. This Picosynechococcus sp. (strain ATCC 27264 / PCC 7002 / PR-6) (Agmenellum quadruplicatum) protein is Cytochrome c6 (petJ).